A 370-amino-acid chain; its full sequence is Aminomethyltransferase (370 aa).

This sequence belongs to the GcvT family. The glycine cleavage system is composed of four proteins: P, T, L and H.

The catalysed reaction is N(6)-[(R)-S(8)-aminomethyldihydrolipoyl]-L-lysyl-[protein] + (6S)-5,6,7,8-tetrahydrofolate = N(6)-[(R)-dihydrolipoyl]-L-lysyl-[protein] + (6R)-5,10-methylene-5,6,7,8-tetrahydrofolate + NH4(+). Functionally, the glycine cleavage system catalyzes the degradation of glycine. The polypeptide is Aminomethyltransferase (Clostridium botulinum (strain Loch Maree / Type A3)).